Here is a 478-residue protein sequence, read N- to C-terminus: uncharacterized protein (478 aa).

The ATP-grasp domain occupies 174–366; the sequence is RQVLAAAGVP…LIGEHIKLAI (193 aa). 214 to 219 contributes to the ATP binding site; it reads GSGSRG. R339 is an active-site residue.

This is an uncharacterized protein from Sinorhizobium fredii (strain NBRC 101917 / NGR234).